The primary structure comprises 304 residues: tRNA (guanine(9)-N1)-methyltransferase (304 aa).

Composition is skewed to basic and acidic residues over residues 1-26 and 42-72; these read MENK…KNET and RQQE…KRKI. The disordered stretch occupies residues 1-72; that stretch reads MENKDALDIG…LRKEERKRKI (72 aa). Positions 81–276 constitute an SAM-dependent MTase TRM10-type domain; the sequence is QKKRIRLGKV…EVIPKRKGIL (196 aa). Residues Leu183, Gly203, 207–211, Cys215, Leu229, and 241–243 each bind S-adenosyl-L-methionine; these read DKNRY and KIL. Asp207 serves as the catalytic Proton acceptor. The disordered stretch occupies residues 282–304; the sequence is SFDVSEDTRSQSNQSDSELEKEN. Ser296 is subject to Phosphoserine.

It belongs to the class IV-like SAM-binding methyltransferase superfamily. TRM10 family. In terms of assembly, monomer.

It localises to the cytoplasm. It is found in the nucleus. It carries out the reaction guanosine(9) in tRNA + S-adenosyl-L-methionine = N(1)-methylguanosine(9) in tRNA + S-adenosyl-L-homocysteine + H(+). Functionally, S-adenosyl-L-methionine-dependent guanine N(1)-methyltransferase that catalyzes the formation of N(1)-methylguanine at position 9 (m1G9) in cytoplasmic tRNA. The sequence is that of tRNA (guanine(9)-N1)-methyltransferase from Schizosaccharomyces pombe (strain 972 / ATCC 24843) (Fission yeast).